The primary structure comprises 337 residues: Eukaryotic translation initiation factor 3 subunit H (337 aa).

One can recognise an MPN domain in the interval 21–153; the sequence is VQCDGLAVMK…LKAYRLTPQA (133 aa).

Belongs to the eIF-3 subunit H family. In terms of assembly, component of the eukaryotic translation initiation factor 3 (eIF-3) complex. The eIF-3 complex interacts with pix. Interacts with mxt.

It localises to the cytoplasm. Its function is as follows. Component of the eukaryotic translation initiation factor 3 (eIF-3) complex, which is involved in protein synthesis of a specialized repertoire of mRNAs and, together with other initiation factors, stimulates binding of mRNA and methionyl-tRNAi to the 40S ribosome. The eIF-3 complex specifically targets and initiates translation of a subset of mRNAs involved in cell proliferation. This chain is Eukaryotic translation initiation factor 3 subunit H, found in Drosophila ananassae (Fruit fly).